Consider the following 448-residue polypeptide: Asparagine--tRNA ligase (448 aa).

Belongs to the class-II aminoacyl-tRNA synthetase family. In terms of assembly, homodimer.

Its subcellular location is the cytoplasm. It carries out the reaction tRNA(Asn) + L-asparagine + ATP = L-asparaginyl-tRNA(Asn) + AMP + diphosphate + H(+). The chain is Asparagine--tRNA ligase from Streptococcus sanguinis (strain SK36).